The chain runs to 137 residues: Large ribosomal subunit protein uL16 (137 aa).

This sequence belongs to the universal ribosomal protein uL16 family. In terms of assembly, part of the 50S ribosomal subunit.

Its function is as follows. Binds 23S rRNA and is also seen to make contacts with the A and possibly P site tRNAs. In Pseudomonas entomophila (strain L48), this protein is Large ribosomal subunit protein uL16.